The primary structure comprises 97 residues: Exodeoxyribonuclease 7 small subunit (97 aa).

Positions 1-21 are disordered; the sequence is MAKTATPGACASDPGSGPLPE.

The protein belongs to the XseB family. Heterooligomer composed of large and small subunits.

It is found in the cytoplasm. The enzyme catalyses Exonucleolytic cleavage in either 5'- to 3'- or 3'- to 5'-direction to yield nucleoside 5'-phosphates.. Bidirectionally degrades single-stranded DNA into large acid-insoluble oligonucleotides, which are then degraded further into small acid-soluble oligonucleotides. This Burkholderia mallei (strain NCTC 10247) protein is Exodeoxyribonuclease 7 small subunit.